Here is an 806-residue protein sequence, read N- to C-terminus: Glycerol-3-phosphate acyltransferase (806 aa).

Residues 305-310 carry the HXXXXD motif motif; sequence CHRSHM.

Belongs to the GPAT/DAPAT family.

The protein resides in the cell inner membrane. The catalysed reaction is sn-glycerol 3-phosphate + an acyl-CoA = a 1-acyl-sn-glycero-3-phosphate + CoA. Its pathway is phospholipid metabolism; CDP-diacylglycerol biosynthesis; CDP-diacylglycerol from sn-glycerol 3-phosphate: step 1/3. This chain is Glycerol-3-phosphate acyltransferase, found in Escherichia fergusonii (strain ATCC 35469 / DSM 13698 / CCUG 18766 / IAM 14443 / JCM 21226 / LMG 7866 / NBRC 102419 / NCTC 12128 / CDC 0568-73).